The primary structure comprises 485 residues: Forkhead box protein N3 (485 aa).

Residues 1 to 21 (MGPVMPPSKKPESPGISVSSG) are disordered. Residues serine 83, serine 85, and serine 97 each carry the phosphoserine modification. The segment at 86–108 (PVQDLDDDTPPSPAHSDMPYDAR) is disordered. Residues 114–210 (KPPYSFSCLI…QALKKTPYHS (97 aa)) constitute a DNA-binding region (fork-head). The interval 315 to 454 (RTESEPSCGS…DEEMKEAAGS (140 aa)) is disordered. The span at 338 to 359 (SSAKSSHARSTSPASDCVSSSS) shows a compositional bias: low complexity. The segment covering 382 to 404 (HESHSETEEDDRKCSPKEAKDAL) has biased composition (basic and acidic residues). Over residues 412-424 (QHKKRQHFAKARK) the composition is skewed to basic residues. Residue serine 443 is modified to Phosphoserine.

In terms of assembly, interacts through its C-terminus with the C-terminus of SNW1/SKIP.

It localises to the nucleus. In terms of biological role, acts as a transcriptional repressor. May be involved in DNA damage-inducible cell cycle arrests (checkpoints). This chain is Forkhead box protein N3 (FOXN3), found in Sus scrofa (Pig).